The primary structure comprises 161 residues: GTP-dependent dephospho-CoA kinase (161 aa).

Residues aspartate 40, valine 41, valine 42, aspartate 59, glutamate 112, and glutamate 135 each contribute to the GTP site.

Belongs to the GTP-dependent DPCK family.

The catalysed reaction is 3'-dephospho-CoA + GTP = GDP + CoA + H(+). Its pathway is cofactor biosynthesis; coenzyme A biosynthesis. Its function is as follows. Catalyzes the GTP-dependent phosphorylation of the 3'-hydroxyl group of dephosphocoenzyme A to form coenzyme A (CoA). This Methanocorpusculum labreanum (strain ATCC 43576 / DSM 4855 / Z) protein is GTP-dependent dephospho-CoA kinase.